A 122-amino-acid chain; its full sequence is Small ribosomal subunit protein bS6 (122 aa).

The protein belongs to the bacterial ribosomal protein bS6 family.

In terms of biological role, binds together with bS18 to 16S ribosomal RNA. This Neisseria meningitidis serogroup C (strain 053442) protein is Small ribosomal subunit protein bS6.